We begin with the raw amino-acid sequence, 93 residues long: YcgL domain-containing protein Shew_2183 (93 aa).

The YcgL domain occupies 1–85; the sequence is MICAVYKSRL…PPVNLLEEYK (85 aa).

The chain is YcgL domain-containing protein Shew_2183 from Shewanella loihica (strain ATCC BAA-1088 / PV-4).